Here is a 79-residue protein sequence, read N- to C-terminus: Small ribosomal subunit protein bS18c (79 aa).

The protein belongs to the bacterial ribosomal protein bS18 family. In terms of assembly, part of the 30S ribosomal subunit.

The protein resides in the plastid. It localises to the chloroplast. The polypeptide is Small ribosomal subunit protein bS18c (Chaetosphaeridium globosum (Charophycean green alga)).